Reading from the N-terminus, the 221-residue chain is uncharacterized protein (221 aa).

This is an uncharacterized protein from Treponema pallidum (strain Nichols).